A 921-amino-acid polypeptide reads, in one-letter code: Isoleucine--tRNA ligase (921 aa).

The 'HIGH' region signature appears at 57-67 (PYANGDIHMGH). Residue glutamate 552 coordinates L-isoleucyl-5'-AMP. A 'KMSKS' region motif is present at residues 593 to 597 (KMSKS). Lysine 596 contributes to the ATP binding site. Zn(2+) contacts are provided by cysteine 888, cysteine 891, cysteine 908, and cysteine 911.

This sequence belongs to the class-I aminoacyl-tRNA synthetase family. IleS type 1 subfamily. As to quaternary structure, monomer. The cofactor is Zn(2+).

The protein resides in the cytoplasm. It catalyses the reaction tRNA(Ile) + L-isoleucine + ATP = L-isoleucyl-tRNA(Ile) + AMP + diphosphate. In terms of biological role, catalyzes the attachment of isoleucine to tRNA(Ile). As IleRS can inadvertently accommodate and process structurally similar amino acids such as valine, to avoid such errors it has two additional distinct tRNA(Ile)-dependent editing activities. One activity is designated as 'pretransfer' editing and involves the hydrolysis of activated Val-AMP. The other activity is designated 'posttransfer' editing and involves deacylation of mischarged Val-tRNA(Ile). This chain is Isoleucine--tRNA ligase, found in Bacillus cytotoxicus (strain DSM 22905 / CIP 110041 / 391-98 / NVH 391-98).